A 410-amino-acid polypeptide reads, in one-letter code: Chaperone protein dnaJ 15 (410 aa).

The 66-residue stretch at 17-82 folds into the J domain; the sequence is DPYEVLCVSK…EKRRHYDNAG (66 aa). A coiled-coil region spans residues 284 to 344; sequence AKTYEDTTEK…TVDELLKQRD (61 aa). Residues 351–410 are disordered; the sequence is SVVKTPSGNNLSNGSSSKAQGDESKGDGDSAGEEGGTENRDKSKRKWFNLNLKGSDKKLG. Residues 357-367 show a composition bias toward low complexity; sequence SGNNLSNGSSS.

This sequence belongs to the DnaJ family. B/II subfamily. In terms of tissue distribution, expressed at high levels in root cap, root tip meristematic region and elongation zones, and at lower levels in mature part of roots (at protein level). Constitutively expressed in seedlings, etiolated or not, roots, rosette leaves, cauline leaves, stems, flowers, siliques and pollen.

Its subcellular location is the cytoplasm. The protein localises to the cytoskeleton. It localises to the endoplasmic reticulum membrane. It is found in the golgi apparatus membrane. Plays a continuous role in plant development probably in the structural organization of compartments. Seems to be involved in early gravitropic signal transduction within the gravity-perceiving cells (statocytes), where it influences pH changes and auxin distribution. Probably affects the localization and/or activity of auxin efflux carrier components (PIN proteins) or other proteins involved in lateral auxin transport. The polypeptide is Chaperone protein dnaJ 15 (ATJ15) (Arabidopsis thaliana (Mouse-ear cress)).